Consider the following 286-residue polypeptide: Phosphate import ATP-binding protein PstB (286 aa).

Residues 40–281 (IAVRNLDFYY…PREQRTQEYI (242 aa)) enclose the ABC transporter domain. Residue 72–79 (GPSGCGKS) coordinates ATP.

Belongs to the ABC transporter superfamily. Phosphate importer (TC 3.A.1.7) family. In terms of assembly, the complex is composed of two ATP-binding proteins (PstB), two transmembrane proteins (PstC and PstA) and a solute-binding protein (PstS).

Its subcellular location is the cell inner membrane. It catalyses the reaction phosphate(out) + ATP + H2O = ADP + 2 phosphate(in) + H(+). Part of the ABC transporter complex PstSACB involved in phosphate import. Responsible for energy coupling to the transport system. This Granulibacter bethesdensis (strain ATCC BAA-1260 / CGDNIH1) protein is Phosphate import ATP-binding protein PstB.